The following is a 571-amino-acid chain: Acetolactate synthase large subunit (571 aa).

Glu-51 provides a ligand contact to thiamine diphosphate. Residues Arg-153, 261–282 (HGTY…IGVR), and 304–323 (DIDP…IVGD) contribute to the FAD site. A thiamine pyrophosphate binding region spans residues 394-474 (QHQMFTALYY…VLILNLNNSS (81 aa)). Asp-445 and Asn-472 together coordinate Mg(2+).

This sequence belongs to the TPP enzyme family. In terms of assembly, dimer of large and small chains. Requires Mg(2+) as cofactor. Thiamine diphosphate is required as a cofactor.

The enzyme catalyses 2 pyruvate + H(+) = (2S)-2-acetolactate + CO2. Its pathway is amino-acid biosynthesis; L-isoleucine biosynthesis; L-isoleucine from 2-oxobutanoate: step 1/4. It functions in the pathway amino-acid biosynthesis; L-valine biosynthesis; L-valine from pyruvate: step 1/4. The chain is Acetolactate synthase large subunit (ilvI) from Buchnera aphidicola subsp. Acyrthosiphon pisum (strain APS) (Acyrthosiphon pisum symbiotic bacterium).